The sequence spans 247 residues: Carboxy-S-adenosyl-L-methionine synthase (247 aa).

S-adenosyl-L-methionine-binding positions include Y39, 64–66 (GCS), 89–90 (DN), 117–118 (DI), N132, and R199.

It belongs to the class I-like SAM-binding methyltransferase superfamily. Cx-SAM synthase family. As to quaternary structure, homodimer.

It catalyses the reaction prephenate + S-adenosyl-L-methionine = carboxy-S-adenosyl-L-methionine + 3-phenylpyruvate + H2O. Its function is as follows. Catalyzes the conversion of S-adenosyl-L-methionine (SAM) to carboxy-S-adenosyl-L-methionine (Cx-SAM). This chain is Carboxy-S-adenosyl-L-methionine synthase, found in Escherichia coli O139:H28 (strain E24377A / ETEC).